Consider the following 315-residue polypeptide: Probable serine acetyltransferase 4 (315 aa).

The segment at 287–315 is disordered; that stretch reads AKPIIGKKAAPQRRPEELPGVTMEQRWSD.

This sequence belongs to the transferase hexapeptide repeat family. In terms of assembly, homomultimer.

It catalyses the reaction L-serine + acetyl-CoA = O-acetyl-L-serine + CoA. The protein operates within amino-acid biosynthesis; L-cysteine biosynthesis; L-cysteine from L-serine: step 1/2. The polypeptide is Probable serine acetyltransferase 4 (SAT4) (Oryza sativa subsp. japonica (Rice)).